The following is a 56-amino-acid chain: Small ribosomal subunit protein bS21 (56 aa).

It belongs to the bacterial ribosomal protein bS21 family.

This Geobacillus stearothermophilus (Bacillus stearothermophilus) protein is Small ribosomal subunit protein bS21 (rpsU).